We begin with the raw amino-acid sequence, 860 residues long: DNA mismatch repair protein MutS (860 aa).

607–614 (GPNMSGKS) lines the ATP pocket.

This sequence belongs to the DNA mismatch repair MutS family.

In terms of biological role, this protein is involved in the repair of mismatches in DNA. It is possible that it carries out the mismatch recognition step. This protein has a weak ATPase activity. The chain is DNA mismatch repair protein MutS from Listeria innocua serovar 6a (strain ATCC BAA-680 / CLIP 11262).